We begin with the raw amino-acid sequence, 803 residues long: MTFNHKKMEPKWQQYWSEHNTFKTTEDKNKENFYALDMFPYPSGAGLHVGHPEGYTATDILSRMKRMQGKNVLHPIGWDAFGLPAEQYAIDTGNDPEEFTALNIANFTRQIKSLGFSYDWDREINTTDPEYYKWTQWIFEKLYENGLAYEAEIAVNWCPALGTVLANEEVIDGKSERGGFPVFRKPMRQWMLKITAYADRLLDDLDLVDWPENIKDMQRNWIGRSEGAEVTFKIKDSDETFNVFTTRPDTLFGATYTVFAPEHELIEKITTPEQKEAVEAYKKQVELKSELERTDLAKDKTGVFTGAYAINPINGEEVPIWIADYVLIQYGTGAIMAVPAHDERDFEFAQQFGLNIRPVLEGGDVTKEAFTGDGPHINSDFLNGLAKAEAITAAIDWLEKEGIGSRKITYRLRDWLFSRQRYWGEPIPVIHWEDGETTLVPEDELPLLLPKATEIKPSGTGESPLANLHDWVNVTDENGRKGRRETNTMPQWAGSSWYFLRYIDPKNSEAIADKEKLAEWLPVDVYIGGAEHAVLHLLYARFWHKFLYDIGVVPTKEPFQKLFNQGMILGENNEKMSKSRGNVVNPDEVVEKYGADTLRLYEMFMGPLEASIAWNENGLEGARKFLDRIWRLLVTEEGTLAEKVTTDANANLEKAYHHMVKTVTNHYENLRFNTGISQLMIFINEAYKQDTIPKQYVEGFVQLLSPIAPHLAEELWEILGHTETISYVAWPTYDETKLVEDEVEIVLQVNGKVKSKITVAKSLGKEELEKIAQEDNKMKENLEGKTIRKVIVVPGKLVNIVAN.

The 'HIGH' region signature appears at 40–51 (PYPSGAGLHVGH). Positions 575-579 (KMSKS) match the 'KMSKS' region motif. Lys-578 serves as a coordination point for ATP.

It belongs to the class-I aminoacyl-tRNA synthetase family.

The protein localises to the cytoplasm. The catalysed reaction is tRNA(Leu) + L-leucine + ATP = L-leucyl-tRNA(Leu) + AMP + diphosphate. In Listeria monocytogenes serotype 4a (strain HCC23), this protein is Leucine--tRNA ligase.